We begin with the raw amino-acid sequence, 336 residues long: DNA polymerase beta (336 aa).

K(+) contacts are provided by Lys-59, Leu-61, and Val-64. Residues Lys-59, Leu-61, and Val-64 each coordinate Na(+). The Nucleophile; Schiff-base intermediate with DNA; for 5'-dRP lyase activity role is filled by Lys-71. The residue at position 82 (Arg-82) is an Omega-N-methylarginine; by PRMT6. Residues Thr-100, Val-102, and Ile-105 each contribute to the K(+) site. Thr-100, Val-102, and Ile-105 together coordinate Na(+). Position 148 (Arg-148) interacts with a 2'-deoxyribonucleoside 5'-triphosphate. Omega-N-methylarginine; by PRMT6 is present on Arg-151. A 2'-deoxyribonucleoside 5'-triphosphate contacts are provided by Ser-179, Arg-182, Gly-188, and Asp-189. Residues 182 to 191 (RGAESSGDID) are DNA-binding. Mg(2+) is bound by residues Asp-189, Asp-191, and Asp-257.

The protein belongs to the DNA polymerase type-X family. Requires Mg(2+) as cofactor. Methylation by PRMT6 stimulates the polymerase activity by enhancing DNA binding and processivity. Post-translationally, ubiquitinated: monoubiquitinated by huwe1/arf-bp1. Monoubiquitinated protein is then the target of stub1/chip, which catalyzes polyubiquitination from monoubiquitin, leading to degradation by the proteasome. usp47 mediates the deubiquitination of monoubiquitinated protein, preventing polyubiquitination by STUB1/CHIP and its subsequent degradation.

Its subcellular location is the nucleus. It localises to the cytoplasm. The enzyme catalyses DNA(n) + a 2'-deoxyribonucleoside 5'-triphosphate = DNA(n+1) + diphosphate. It carries out the reaction a 5'-end 2'-deoxyribose-2'-deoxyribonucleotide-DNA = (2E,4S)-4-hydroxypenten-2-al-5-phosphate + a 5'-end 5'-phospho-2'-deoxyribonucleoside-DNA + H(+). It catalyses the reaction 2'-deoxyribonucleotide-(2'-deoxyribose 5'-phosphate)-2'-deoxyribonucleotide-DNA = a 3'-end 2'-deoxyribonucleotide-(2,3-dehydro-2,3-deoxyribose 5'-phosphate)-DNA + a 5'-end 5'-phospho-2'-deoxyribonucleoside-DNA + H(+). Functionally, repair polymerase that plays a key role in base-excision repair. During this process, the damaged base is excised by specific DNA glycosylases, the DNA backbone is nicked at the abasic site by an apurinic/apyrimidic (AP) endonuclease, and POLB removes 5'-deoxyribose-phosphate from the preincised AP site acting as a 5'-deoxyribose-phosphate lyase (5'-dRP lyase); through its DNA polymerase activity, it adds one nucleotide to the 3' end of the arising single-nucleotide gap. Conducts 'gap-filling' DNA synthesis in a stepwise distributive fashion rather than in a processive fashion as for other DNA polymerases. It is also able to cleave sugar-phosphate bonds 3' to an intact AP site, acting as an AP lyase. This Danio rerio (Zebrafish) protein is DNA polymerase beta (polb).